Consider the following 341-residue polypeptide: MANSSGSSRNLTAADWGGFDDNMQSGGGAAVIDMENMDDTSGSSFEDMGEIHQHMKEEEEEVEGEGVPEDGEEDGAFLGMKGVQGQLGRQVADEMWQAGKRQASKAFNLYANIDILRPYFDVEPIQVRHRLLESMIPVKMISFPQKIAGELYGPLMLVFTMVAILLHGMKSSGTIIREGTLMGTAIGTCFGYWLGVSSFIYFLAYLCNAQITMLQTLSLLGYGLFGHCIVLFITYNIHFHSLFYIFWLCIGGLSTLRMVAVLLSRTVGHTQRLIVCGTMAALHMLFLLYLHFAYHKVVEGILDTLDGQNVPLPIQRVARDLPVGPNTVLNATVQVLLAHSR.

Over 1–146 the chain is Cytoplasmic; it reads MANSSGSSRN…PVKMISFPQK (146 aa). Residues 26 to 46 form a disordered region; that stretch reads GGGAAVIDMENMDDTSGSSFE. Residues 147-167 traverse the membrane as a helical segment; that stretch reads IAGELYGPLMLVFTMVAILLH. The Lumenal segment spans residues 168–185; it reads GMKSSGTIIREGTLMGTA. Residues 186-206 traverse the membrane as a helical segment; it reads IGTCFGYWLGVSSFIYFLAYL. At 207 to 212 the chain is on the cytoplasmic side; it reads CNAQIT. A helical membrane pass occupies residues 213–233; that stretch reads MLQTLSLLGYGLFGHCIVLFI. Over 234 to 242 the chain is Lumenal; sequence TYNIHFHSL. A helical membrane pass occupies residues 243–263; sequence FYIFWLCIGGLSTLRMVAVLL. The Cytoplasmic segment spans residues 264-272; the sequence is SRTVGHTQR. Residues 273–293 traverse the membrane as a helical segment; it reads LIVCGTMAALHMLFLLYLHFA. At 294–341 the chain is on the lumenal side; sequence YHKVVEGILDTLDGQNVPLPIQRVARDLPVGPNTVLNATVQVLLAHSR. N-linked (GlcNAc...) asparagine glycosylation occurs at N330.

It belongs to the YIP1 family.

It is found in the cell membrane. It localises to the golgi apparatus. Its subcellular location is the cis-Golgi network membrane. The protein localises to the cytoplasm. Involved in the maintenance of the Golgi structure. May play a role in hematopoiesis. The chain is Protein YIPF3 (yipf3) from Xenopus laevis (African clawed frog).